We begin with the raw amino-acid sequence, 1023 residues long: Sodium/potassium-transporting ATPase subunit alpha-1 (1023 aa).

A propeptide spanning residues 1–5 is cleaved from the precursor; that stretch reads MGYGA. Basic and acidic residues predominate over residues 1–11; the sequence is MGYGAGRDKYE. The segment at 1–34 is disordered; the sequence is MGYGAGRDKYEPAATSEHGGKKGKGKGKDRDMEE. Over 6-87 the chain is Cytoplasmic; the sequence is GRDKYEPAAT…NALTPPPTTP (82 aa). Thr-15 is subject to Phosphothreonine; by PKC. Ser-16 carries the phosphoserine; by PKC modification. Residues 82–84 form an interaction with phosphoinositide-3 kinase region; it reads PPP. Residues 88–108 form a helical membrane-spanning segment; sequence EWVKFCRQLFGGFSMLLWIGA. Residues 109-131 are Extracellular-facing; sequence ILCFLAYGIRKASDLEPDNDNLY. Residues 132-152 form a helical membrane-spanning segment; that stretch reads LGVVLSAVVIITGCFSYYQEA. The Cytoplasmic portion of the chain corresponds to 153-288; it reads KSSRIMESFK…GGQTPIAVEI (136 aa). Residues 215–235 form a disordered region; the sequence is NSSLTGESEPQTRSPDFTNEN. The helical transmembrane segment at 289–308 threads the bilayer; it reads GHFIHIITGVAVFLGVSFFI. Residues 309-320 are Extracellular-facing; it reads LSLILHYTWLEA. The chain crosses the membrane as a helical span at residues 321–338; that stretch reads VIFLIGIIVANVPEGLLA. The Cytoplasmic segment spans residues 339-772; the sequence is TVTVCLTLTA…EEGRLIFDNL (434 aa). The 4-aspartylphosphate intermediate role is filled by Asp-376. Lys-487 contacts ATP. Residues Asp-717 and Asp-721 each coordinate Mg(2+). The chain crosses the membrane as a helical span at residues 773 to 792; sequence KKSIAYTLTSNIPEITPFLI. Topologically, residues 793-802 are extracellular; the sequence is FIIADIPLPL. A helical membrane pass occupies residues 803–823; sequence GTVTILCIDLGTDMVPAISLA. The Cytoplasmic portion of the chain corresponds to 824–843; that stretch reads YEQAESDIMKRQPRNPKKDK. Residues 844-866 form a helical membrane-spanning segment; that stretch reads LVNERLISMAYGQIGMIQALGGF. Topologically, residues 867 to 918 are extracellular; sequence FAYFVILAENGFLPSTLLGIRVAWEDRYVNDVEDSYGQQWTYEQRKIVEFTC. Residues 919 to 938 traverse the membrane as a helical segment; sequence HTAFFVSIVVVQWADLIICK. The Cytoplasmic segment spans residues 939 to 951; sequence TRRNSVFQQGMKN. A Phosphoserine; by PKA modification is found at Ser-943. Residues 952 to 970 traverse the membrane as a helical segment; sequence KILIFGLFEETALAAFLSY. Over 971–985 the chain is Extracellular; the sequence is CPGMDVALRMYPLKP. A helical membrane pass occupies residues 986 to 1006; that stretch reads TWWFCAFPYSLLIFIYDEVRK. Residues 1007-1023 lie on the Cytoplasmic side of the membrane; that stretch reads LILRRSPGGWVEKETYY.

The protein belongs to the cation transport ATPase (P-type) (TC 3.A.3) family. Type IIC subfamily. In terms of assembly, the sodium/potassium-transporting ATPase is composed of a catalytic alpha subunit, an auxiliary non-catalytic beta subunit and an additional regulatory subunit. As to expression, mainly expressed in kidney. Found in bladder, colon, eye, and testis. Found in low levels in brain, heart, spleen and liver.

The protein resides in the cell membrane. It localises to the sarcolemma. The enzyme catalyses K(+)(out) + Na(+)(in) + ATP + H2O = K(+)(in) + Na(+)(out) + ADP + phosphate + H(+). With respect to regulation, this alpha subunit is resistant to ouabain. In terms of biological role, this is the catalytic component of the active enzyme, which catalyzes the hydrolysis of ATP coupled with the exchange of sodium and potassium ions across the plasma membrane. This action creates the electrochemical gradient of sodium and potassium ions, providing the energy for active transport of various nutrients. The chain is Sodium/potassium-transporting ATPase subunit alpha-1 (ATP1A1) from Rhinella marina (Cane toad).